A 280-amino-acid polypeptide reads, in one-letter code: Diaminopimelate epimerase (280 aa).

Positions 12, 45, and 65 each coordinate substrate. The active-site Proton donor is the Cys-74. Substrate is bound by residues 75–76 (GN), Asn-163, Asn-196, and 214–215 (ER). Catalysis depends on Cys-223, which acts as the Proton acceptor. 224–225 (GT) provides a ligand contact to substrate.

It belongs to the diaminopimelate epimerase family. In terms of assembly, homodimer.

It localises to the cytoplasm. The catalysed reaction is (2S,6S)-2,6-diaminopimelate = meso-2,6-diaminopimelate. Its pathway is amino-acid biosynthesis; L-lysine biosynthesis via DAP pathway; DL-2,6-diaminopimelate from LL-2,6-diaminopimelate: step 1/1. In terms of biological role, catalyzes the stereoinversion of LL-2,6-diaminopimelate (L,L-DAP) to meso-diaminopimelate (meso-DAP), a precursor of L-lysine and an essential component of the bacterial peptidoglycan. This Shewanella sediminis (strain HAW-EB3) protein is Diaminopimelate epimerase.